Reading from the N-terminus, the 490-residue chain is Sushi domain-containing protein 4 (490 aa).

The tract at residues 1-20 (MYHGMNPSNGDGFLEQQLQQ) is disordered. An N-terminal signal peptide occupies residues 1–41 (MYHGMNPSNGDGFLEQQLQQQQPQSPQRLLAVILWFQLALC). At 42-319 (FGPAQLTGGF…PSTHETLLTT (278 aa)) the chain is on the extracellular side. Sushi domains are found at residues 55 to 119 (NVCA…VCIQ), 120 to 179 (EDCR…ICQG), 178 to 239 (QGCL…RCLA), and 241 to 304 (EVCP…YCIK). Cystine bridges form between C57–C99, C85–C117, C122–C165, C147–C177, C180–C224, C210–C237, C243–C289, and C274–C302. 2 N-linked (GlcNAc...) asparagine glycosylation sites follow: N104 and N134. N-linked (GlcNAc...) asparagine glycosylation occurs at N192. A helical transmembrane segment spans residues 320-340 (WKIVAFTATSVLLVLLLVILA). Over 341-490 (RMFQTKFKAH…DEIPLMEEDP (150 aa)) the chain is Cytoplasmic. The interval 394–490 (YPASVGQGCP…DEIPLMEEDP (97 aa)) is disordered. 2 stretches are compositionally biased toward polar residues: residues 430–444 (CDST…QSLY) and 461–475 (DTIS…STSP). Positions 479 to 490 (IADEIPLMEEDP) are enriched in acidic residues.

As to expression, high expression in brain and eye, with weaker expression in spinal cord and testis. Detected in white matter of brain and in the outer segments of photoreceptors.

It is found in the membrane. Functionally, acts as a complement inhibitor by disrupting the formation of the classical C3 convertase. Isoform 3 inhibits the classical complement pathway, while membrane-bound isoform 1 inhibits deposition of C3b via both the classical and alternative complement pathways. In Mus musculus (Mouse), this protein is Sushi domain-containing protein 4 (Susd4).